The following is a 441-amino-acid chain: GTPase Der (441 aa).

EngA-type G domains follow at residues Pro4–Ile168 and Ile177–Ser352. GTP-binding positions include Gly10–Ser17, Asp57–Ile61, Asn121–Glu124, Gly183–Ser190, Asp230–Met234, and Asn295–Asp298. The KH-like domain maps to Thr353–Asp437.

The protein belongs to the TRAFAC class TrmE-Era-EngA-EngB-Septin-like GTPase superfamily. EngA (Der) GTPase family. In terms of assembly, associates with the 50S ribosomal subunit.

In terms of biological role, GTPase that plays an essential role in the late steps of ribosome biogenesis. This is GTPase Der from Desulfitobacterium hafniense (strain DSM 10664 / DCB-2).